Consider the following 608-residue polypeptide: Sensor protein kinase WalK (608 aa).

A run of 2 helical transmembrane segments spans residues leucine 14–threonine 34 and isoleucine 183–alanine 203. The HAMP domain occupies arginine 204–alanine 256. In terms of domain architecture, PAS spans glutamate 261–leucine 331. Histidine 271, aspartate 274, histidine 364, and glutamate 368 together coordinate Zn(2+). The 65-residue stretch at leucine 314–glutamate 378 folds into the PAC domain. One can recognise a Histidine kinase domain in the interval asparagine 382–valine 600. The residue at position 385 (histidine 385) is a Phosphohistidine; by autocatalysis.

As to quaternary structure, forms homodimers. Forms homooligomers. Autophosphorylated.

It is found in the cell membrane. The enzyme catalyses ATP + protein L-histidine = ADP + protein N-phospho-L-histidine.. Its activity is regulated as follows. By zinc. Zinc-binding negatively regulates WalK kinase activity and thus autophosphorylation. In terms of biological role, member of the two-component regulatory system WalK/WalR that regulates genes involved in cell wall metabolism, virulence regulation, biofilm production, oxidative stress resistance and antibiotic resistance via direct or indirect regulation of autolysins. Functions as a sensor protein kinase which is autophosphorylated at a histidine residue in the dimerization domain and transfers its phosphate group to the conserved aspartic acid residue in the regulatory domain of WalR. In turn, WalR binds to the upstream promoter regions of the target genes to positively and negatively regulate their expression. The chain is Sensor protein kinase WalK (walK) from Staphylococcus aureus (strain Newman).